The following is a 400-amino-acid chain: Octopine dehydrogenase (400 aa).

Residues 10–13 (GGNG) and 35–38 (FADE) contribute to the NADH site. Pyruvate-binding residues include Q118 and T143. Substrate is bound at residue Q118. Position 148 (C148) interacts with NAD(+). M206 provides a ligand contact to L-arginine. Pyruvate is bound at residue H212. The active site involves H212. R324 contributes to the NAD(+) binding site.

It belongs to the lysopine/nopaline/octopine/opine/vitopine dehydrogenases family.

The enzyme catalyses D-octopine + NAD(+) + H2O = L-arginine + pyruvate + NADH + H(+). In terms of biological role, catalyzes the reverse reaction of octopine dehydrogenation. Acts on L-arginine in preference to other substrates. The polypeptide is Octopine dehydrogenase (Mizuhopecten yessoensis (Japanese scallop)).